The chain runs to 632 residues: Tetratricopeptide repeat protein 39B (632 aa).

TPR repeat units follow at residues 343 to 376, 535 to 568, and 576 to 609; these read SLVLFYHARIELLKGNLEEAQEVFRKCVSVQEEW, CLVKLLKGCCLKNLQRPLQAELCYNHVVESEKLL, and PFTLFELASLYKSQGEIDKAIKFLETARNNYKDY.

This sequence belongs to the TTC39 family.

In terms of biological role, regulates high density lipoprotein (HDL) cholesterol metabolism by promoting the ubiquitination and degradation of the oxysterols receptors LXR (NR1H2 and NR1H3). This is Tetratricopeptide repeat protein 39B (TTC39B) from Macaca fascicularis (Crab-eating macaque).